The following is a 648-amino-acid chain: Exoribonuclease 2 (648 aa).

Positions 191-518 constitute an RNB domain; it reads RIDLTYLDFI…INHRLIKSII (328 aa). An S1 motif domain is found at 565–647; sequence KKKYQANIID…GNKKIIATMI (83 aa).

This sequence belongs to the RNR ribonuclease family. RNase II subfamily.

It localises to the cytoplasm. It carries out the reaction Exonucleolytic cleavage in the 3'- to 5'-direction to yield nucleoside 5'-phosphates.. Its function is as follows. Involved in mRNA degradation. Hydrolyzes single-stranded polyribonucleotides processively in the 3' to 5' direction. The protein is Exoribonuclease 2 of Buchnera aphidicola subsp. Cinara cedri (strain Cc).